The primary structure comprises 166 residues: uncharacterized protein (166 aa).

A2 is modified (N-acetylalanine).

Homodimer.

This is an uncharacterized protein from Arabidopsis thaliana (Mouse-ear cress).